The chain runs to 397 residues: Arginine biosynthesis bifunctional protein ArgJ (397 aa).

Substrate contacts are provided by Thr147, Lys173, Thr184, Glu270, Asn392, and Thr397. Residue Thr184 is the Nucleophile of the active site.

It belongs to the ArgJ family. Heterotetramer of two alpha and two beta chains.

It localises to the cytoplasm. The catalysed reaction is N(2)-acetyl-L-ornithine + L-glutamate = N-acetyl-L-glutamate + L-ornithine. It carries out the reaction L-glutamate + acetyl-CoA = N-acetyl-L-glutamate + CoA + H(+). The protein operates within amino-acid biosynthesis; L-arginine biosynthesis; L-ornithine and N-acetyl-L-glutamate from L-glutamate and N(2)-acetyl-L-ornithine (cyclic): step 1/1. Its pathway is amino-acid biosynthesis; L-arginine biosynthesis; N(2)-acetyl-L-ornithine from L-glutamate: step 1/4. Functionally, catalyzes two activities which are involved in the cyclic version of arginine biosynthesis: the synthesis of N-acetylglutamate from glutamate and acetyl-CoA as the acetyl donor, and of ornithine by transacetylation between N(2)-acetylornithine and glutamate. The protein is Arginine biosynthesis bifunctional protein ArgJ of Streptococcus mutans serotype c (strain ATCC 700610 / UA159).